Here is a 474-residue protein sequence, read N- to C-terminus: RNA-binding protein Nova-1 (474 aa).

Polar residues predominate over residues 1–12; sequence MAAAPIQQNGTH. The disordered stretch occupies residues 1-43; the sequence is MAAAPIQQNGTHTGVPIDLDPPDSRKRPLEAPPEAGSTKRTNT. The Bipartite nuclear localization signal signature appears at 26 to 42; it reads KRPLEAPPEAGSTKRTN. KH domains are found at residues 48-115, 146-212, and 396-463; these read QYFL…HGFI, IKQV…VELI, and KDVV…QYLI. The tract at residues 394–474 is required for RNA binding; sequence GSKDVVEIAV…QRITYEQGVR (81 aa).

Interacts with PTBP2; the interaction is direct.

Its subcellular location is the nucleus. Functions to regulate alternative splicing in neurons by binding pre-mRNA in a sequence-specific manner to activate exon inclusion or exclusion. It binds specifically to the sequences 5'-YCAY-3' and regulates splicing in only a subset of regulated exons. Binding to an exonic 5'-YCAY-3' cluster changes the protein complexes assembled on pre-mRNA, blocking U1 snRNP binding and exon inclusion, whereas binding to an intronic 5'-YCAY-3' cluster enhances spliceosome assembly and exon inclusion. Binding to 5'-YCAY-3' clusters results in a local and asymmetric action to regulate spliceosome assembly and alternative splicing in neurons. Binding to an exonic 5'-YCAY-3' cluster changed the protein complexes assembled on pre-mRNA, blocking U1 snRNP (small nuclear ribonucleoprotein) binding and exon inclusion, whereas binding to an intronic 5'-YCAY-3' cluster enhanced spliceosome assembly and exon inclusion. With NOVA1, they perform unique biological functions in different brain areas and cell types. Autoregulates its own expression by acting as a splicing repressor. Acts to activate the inclusion of exon E3A in the glycine receptor alpha-2 chain and of exon E9 in gamma-aminobutyric-acid receptor gamma-2 subunit via a distal downstream UCAU-rich intronic splicing enhancer. Acts to regulate a novel glycine receptor alpha-2 chain splice variant (alpha-2N) in developing spinal cord. The chain is RNA-binding protein Nova-1 from Rattus norvegicus (Rat).